The primary structure comprises 863 residues: MTIRKNSGLVPINIQLYKTTPIQTILQAEQQDRFLQPAELSQLLSYMKSGVLRLEIAETLSRNSTNIVNAASNRIFVGGSPLSYLEKPEDSIDISSIDTKNTKFSFSNIFKNLFSNEDSIPAGFKPITIVKYGSNKMRKSLRDLDWFLRYLSYAIIIGDPNILAVNIKGLREIIENACSTAATIVALRTMKRTCIKLFSSNPEAESIVNQYFNVIIQEFEAPSLSDRIRKRNSADLQGLTLPQTYFLSSSTQFKYAMKPNLSVEEKNEIIRAAYRQVFERDIVKAYSLSLTKMESRVKIGQISMKEFIRALGKSSLYRKEFFDSFSNSRVVELAFRHFLGRGISSLEEFQKYFAIVSQEGLGGLVDTLINSKEYSDYFGEETVPYLRSLGEEAQECRNWGVQIKLFNYSARFQKKPQFITLFKDYQTPLPDQHPYGHSNDPLAIQFGAIFSKKTSTAFVNKDVRRILIYKGAPIENQLSRPLKLNAYKELNSYNLQIIKQSDNLTENIIRACYLRVFGRNPYTEEKLILQPIENQFRDKCISIKELIRALSKSNLFRKLYWTPFYVCKSIEYIHIRLLGRPTYGRKEINNYFNISAQGGFYKLIDAIIDSEEYSQVFGDNIIPYERYLTPYNLSLGTLRVSSIREKFKKLQPPVDKKFVELGRVKEIRSKNNIILKLNQGVSKRREQTVIFARHINNSQSSLEQIIKAAYRQVFERDIDPYTIGREFYSIETLFYAGSLSVKEFIEHLGQSELYRKEFFEPYPNTKVIELGTKHFLGRAPKDQGEIRLYNQILRSQGLKSFVKSLINSQEYIEIFGDSIVPYRRFPTLPAGTFPNTDILYKNLTKQKFFILMPSYKNTKLLSV.

Residue Cys-178 participates in (2R,3E)-phycocyanobilin binding. PBS-linker domains lie at 235–414 (DLQG…RFQK), 473–652 (PIEN…KLQP), and 671–852 (NNII…FILM).

It belongs to the phycobilisome linker protein family. Contains one covalently linked bilin chromophore. This protein autochromophorylates (Potential).

The protein localises to the plastid. The protein resides in the chloroplast thylakoid membrane. This protein is postulated to act both as terminal energy acceptor and as a linker polypeptide that stabilizes the phycobilisome architecture. May have intrinsic bilin lyase activity. This chain is Phycobiliprotein ApcE (apcE), found in Galdieria sulphuraria (Red alga).